A 114-amino-acid polypeptide reads, in one-letter code: Fumarate reductase subunit D (114 aa).

3 consecutive transmembrane segments (helical) span residues 24–44 (ISALAFPVLILILGILLPLGI), 49–69 (GIIAFAHHWFGKLVILVLTIF), and 94–114 (LIFYGLAVLYTVVAIWGVASI).

This sequence belongs to the FrdD family. In terms of assembly, part of an enzyme complex containing four subunits: a flavoprotein (FrdA), an iron-sulfur protein (FrdB), and two hydrophobic anchor proteins (FrdC and FrdD).

It localises to the cell inner membrane. Functionally, anchors the catalytic components of the fumarate reductase complex to the cell membrane, binds quinones. The protein is Fumarate reductase subunit D of Actinobacillus succinogenes (strain ATCC 55618 / DSM 22257 / CCUG 43843 / 130Z).